The primary structure comprises 346 residues: Angiopoietin-related protein 7 (346 aa).

Positions 1–26 are cleaved as a signal peptide; the sequence is MLKKPLSAVTWLCIFIVAFVSHPAWL. A coiled-coil region spans residues 39 to 119; that stretch reads QLKAANCCEE…DIMQLQAAQT (81 aa). N58 carries an N-linked (GlcNAc...) asparagine glycan. The region spanning 122–343 is the Fibrinogen C-terminal domain; the sequence is QTSADAIYDC…RVEMKIRPED (222 aa). A disulfide bridge connects residues C131 and C162. N-linked (GlcNAc...) asparagine glycans are attached at residues N253 and N267. C285 and C298 are joined by a disulfide.

Homotetramer; disulfide-linked. In terms of tissue distribution, highly expressed in the cornea (at protein level). Expression is restricted to the stromal layer. Also detected at the junction between the corneal stromal layer and the conjuctiva. Not detected in the sclera.

The protein resides in the secreted. Functionally, has a role in the formation and organization of the extracellular matrix. In the eye, it functions as a mediator of dexamethasone-induced matrix deposition in the trabecular meshwork, the tissue responsible for the outflow of the ocular aqueous humor and for the maintenance of intraocular pressure. Is a negative regulator of angiogenesis in the cornea, and plays a major role in maintaining corneal avascularity and transparency. This is Angiopoietin-related protein 7 (ANGPTL7) from Homo sapiens (Human).